We begin with the raw amino-acid sequence, 325 residues long: Aldo-keto reductase family 1 member A1 (325 aa).

Threonine 2 is modified (N-acetylthreonine). Phosphoserine is present on serine 4. Residues 11 to 20 (GQKMPLIGLG), threonine 21, and tryptophan 22 contribute to the NADP(+) site. Serine 38 is modified (phosphoserine). Residue aspartate 45 coordinates NADP(+). The active-site Proton donor is the tyrosine 50. Lysine 127 carries the post-translational modification N6-acetyllysine; alternate. Lysine 127 carries the N6-succinyllysine; alternate modification. At lysine 145 the chain carries N6-succinyllysine. The NADP(+) site is built by serine 162, asparagine 163, serine 211, leucine 213, serine 215, serine 216, lysine 263, serine 264, isoleucine 265, arginine 269, glutamine 272, and asparagine 273. Position 211 is a phosphoserine (serine 211).

It belongs to the aldo/keto reductase family. As to quaternary structure, monomer. Widely expressed.

It localises to the cytoplasm. It is found in the cytosol. The protein resides in the apical cell membrane. The enzyme catalyses a primary alcohol + NADP(+) = an aldehyde + NADPH + H(+). It carries out the reaction L-gulonate + NADP(+) = aldehydo-D-glucuronate + NADPH + H(+). It catalyses the reaction L-gulono-1,4-lactone + NADP(+) = D-glucurono-3,6-lactone + NADPH + H(+). The catalysed reaction is allyl alcohol + NADP(+) = acrolein + NADPH + H(+). The enzyme catalyses glycerol + NADP(+) = D-glyceraldehyde + NADPH + H(+). It carries out the reaction glycerol + NADP(+) = L-glyceraldehyde + NADPH + H(+). It catalyses the reaction hydroxyacetone + NADP(+) = methylglyoxal + NADPH + H(+). The catalysed reaction is 3-deoxyfructose + NADP(+) = 3-deoxyglucosone + NADPH + H(+). The enzyme catalyses (R)-mevalonate + NADP(+) = (R)-mevaldate + NADPH + H(+). It carries out the reaction pyridine 3-methanol + NADP(+) = pyridine-3-carbaldehyde + NADPH + H(+). It catalyses the reaction S-nitroso-CoA + NADPH + H(+) = sulfinamide-CoA + NADP(+). The catalysed reaction is S-nitrosoglutathione + NADPH + H(+) = S-(hydroxysulfenamide)glutathione + NADP(+). Its function is as follows. Catalyzes the NADPH-dependent reduction of a wide variety of carbonyl-containing compounds to their corresponding alcohols. Displays enzymatic activity towards endogenous metabolites such as aromatic and aliphatic aldehydes, ketones, monosaccharides and bile acids, with a preference for negatively charged substrates, such as glucuronate and succinic semialdehyde. Plays an important role in ascorbic acid biosynthesis by catalyzing the reduction of D-glucuronic acid and D-glucurono-gamma-lactone. Functions as a detoxifiying enzyme by reducing a range of toxic aldehydes. Reduces methylglyoxal and 3-deoxyglucosone, which are present at elevated levels under hyperglycemic conditions and are cytotoxic. Involved in the detoxification of lipid-derived aldehydes like acrolein. Plays a role in the activation of procarcinogens, such as polycyclic aromatic hydrocarbon trans-dihydrodiols, and in the metabolism of various xenobiotics and drugs. Also acts as an inhibitor of protein S-nitrosylation by mediating degradation of S-nitroso-coenzyme A (S-nitroso-CoA), a cofactor required to S-nitrosylate proteins. S-nitroso-CoA reductase activity is involved in reprogramming intermediary metabolism in renal proximal tubules, notably by inhibiting protein S-nitrosylation of isoform 2 of PKM (PKM2). Also acts as a S-nitroso-glutathione reductase by catalyzing the NADPH-dependent reduction of S-nitrosoglutathione. Displays no reductase activity towards retinoids. In Mus musculus (Mouse), this protein is Aldo-keto reductase family 1 member A1.